Reading from the N-terminus, the 224-residue chain is MQFPAFYVTGTDTGIGKTVASTALLHAVRARGHTAVGMKPVASGCVATPQGWHNEDALALQAASQPQPDYATLNPYALPAALAPELAAADVGVSLSLVPLQLAFAQLRAQAEVVVVEGVGGWAAPLSAQLDQADLVRTLQLPVVLVVGVRLGCINHARLTAAAIAADGLRCIGWIANEIDPQMERIEDNIRMLGQRLAMPCWGRIPWRPNAQAEGLAQHIRLPE.

14–19 (GIGKTV) is a binding site for ATP. T18 provides a ligand contact to Mg(2+). The active site involves K39. S43 is a substrate binding site. ATP-binding positions include D56, 117–120 (EGVG), and 177–178 (NE). 2 residues coordinate Mg(2+): D56 and E117.

This sequence belongs to the dethiobiotin synthetase family. As to quaternary structure, homodimer. Mg(2+) is required as a cofactor.

The protein localises to the cytoplasm. It catalyses the reaction (7R,8S)-7,8-diammoniononanoate + CO2 + ATP = (4R,5S)-dethiobiotin + ADP + phosphate + 3 H(+). Its pathway is cofactor biosynthesis; biotin biosynthesis; biotin from 7,8-diaminononanoate: step 1/2. Catalyzes a mechanistically unusual reaction, the ATP-dependent insertion of CO2 between the N7 and N8 nitrogen atoms of 7,8-diaminopelargonic acid (DAPA, also called 7,8-diammoniononanoate) to form a ureido ring. The chain is ATP-dependent dethiobiotin synthetase BioD from Xanthomonas campestris pv. campestris (strain B100).